The chain runs to 262 residues: Putative non-heme bromoperoxidase BpoC (262 aa).

Residues R21, 87–88, and R120 contribute to the substrate site; that span reads SM. S87 is an active-site residue. Active-site residues include D211 and H239. H239 provides a ligand contact to substrate.

The protein belongs to the AB hydrolase superfamily. As to quaternary structure, homodimer.

This Mycobacterium tuberculosis (strain CDC 1551 / Oshkosh) protein is Putative non-heme bromoperoxidase BpoC (bpoC).